The following is a 286-amino-acid chain: Ribose-5-phosphate isomerase (286 aa).

The protein belongs to the ribose 5-phosphate isomerase family.

The protein resides in the cytoplasm. It catalyses the reaction aldehydo-D-ribose 5-phosphate = D-ribulose 5-phosphate. It participates in carbohydrate degradation; pentose phosphate pathway; D-ribose 5-phosphate from D-ribulose 5-phosphate (non-oxidative stage): step 1/1. This is Ribose-5-phosphate isomerase (RKI1) from Mycosarcoma maydis (Corn smut fungus).